A 122-amino-acid chain; its full sequence is Large ribosomal subunit protein uL14 (122 aa).

Belongs to the universal ribosomal protein uL14 family. As to quaternary structure, part of the 50S ribosomal subunit. Forms a cluster with proteins L3 and L19. In the 70S ribosome, L14 and L19 interact and together make contacts with the 16S rRNA in bridges B5 and B8.

In terms of biological role, binds to 23S rRNA. Forms part of two intersubunit bridges in the 70S ribosome. This chain is Large ribosomal subunit protein uL14, found in Pseudomonas aeruginosa (strain LESB58).